The chain runs to 1118 residues: Cytospin-A (1118 aa).

Positions 1–176 (MKKASRSVGS…SKSKSDNQIS (176 aa)) are disordered. Residues 29–52 (ESGSSLSAVTKLSKPGTSASLLKT) show a composition bias toward polar residues. The segment covering 79–119 (STCASTVSSTTGTTMSTLENKPRTVAGSTARRSTSSGTKES) has biased composition (low complexity). 2 stretches are compositionally biased toward basic and acidic residues: residues 120-131 (SSSRERIRDRSR) and 158-171 (TNPE…KSKS). Positions 193 to 281 (KTKDVEILHL…LNALGFSLEQ (89 aa)) form a coiled coil. Disordered stretches follow at residues 299–324 (ITAG…GSME) and 359–391 (SSDD…NASE). The span at 359–373 (SSDDALDAPSSSESE) shows a compositional bias: low complexity. 2 coiled-coil regions span residues 396 to 450 (CLTE…MESL) and 488 to 808 (RYME…RGRV). Disordered stretches follow at residues 856–879 (PSPA…PPAA) and 921–1002 (TSST…RKDP). Low complexity predominate over residues 937–946 (ESAKSISVSR). A compositionally biased stretch (basic and acidic residues) spans 947-957 (RSSEEIKRDIS). The segment covering 972 to 991 (TTSPQLSLSSSPTASVTPTT) has biased composition (low complexity). Residues 1012–1117 (GSKRNALLKW…YVTAIYKYFE (106 aa)) form the Calponin-homology (CH) domain.

The protein belongs to the cytospin-A family. As to quaternary structure, may interact with both microtubules and actin cytoskeleton.

Its subcellular location is the cytoplasm. It localises to the cytoskeleton. The protein resides in the spindle. It is found in the cell junction. The protein localises to the gap junction. Functionally, involved in cytokinesis and spindle organization. May play a role in actin cytoskeleton organization and microtubule stabilization and hence required for proper cell adhesion and migration. This Gallus gallus (Chicken) protein is Cytospin-A (SPECC1L).